We begin with the raw amino-acid sequence, 123 residues long: Large ribosomal subunit protein eL8 (123 aa).

It belongs to the eukaryotic ribosomal protein eL8 family. As to quaternary structure, part of the 50S ribosomal subunit. Probably part of the RNase P complex.

It localises to the cytoplasm. Multifunctional RNA-binding protein that recognizes the K-turn motif in ribosomal RNA, the RNA component of RNase P, box H/ACA, box C/D and box C'/D' sRNAs. The protein is Large ribosomal subunit protein eL8 of Methanobrevibacter smithii (strain ATCC 35061 / DSM 861 / OCM 144 / PS).